The following is a 268-amino-acid chain: Glutamine amidotransferase-like class 1 domain-containing protein 3, mitochondrial (268 aa).

The transit peptide at 1 to 41 (MAAVRVLVASRLAAASAFTSLSPGGRTPSQRAALHLSVPRP) directs the protein to the mitochondrion. An N6-acetyllysine mark is found at lysine 151, lysine 157, and lysine 164. Lysine 203 is modified (N6-acetyllysine; alternate). An N6-succinyllysine; alternate modification is found at lysine 203. Lysine 219 is subject to N6-acetyllysine. 2 positions are modified to N6-acetyllysine; alternate: lysine 223 and lysine 233. N6-succinyllysine; alternate occurs at positions 223 and 233.

This sequence belongs to the GATD3 family.

The protein resides in the mitochondrion. The chain is Glutamine amidotransferase-like class 1 domain-containing protein 3, mitochondrial from Homo sapiens (Human).